The chain runs to 504 residues: 2-isopropylmalate synthase (504 aa).

Residues 6–267 (IIIFDTTLRD…YTGIISKEIY (262 aa)) enclose the Pyruvate carboxyltransferase domain. The Mn(2+) site is built by aspartate 15, histidine 201, histidine 203, and asparagine 237. The regulatory domain stretch occupies residues 391–504 (EITDLLQSSG…LNSYLRIHKN (114 aa)).

The protein belongs to the alpha-IPM synthase/homocitrate synthase family. LeuA type 1 subfamily. As to quaternary structure, homodimer. Requires Mn(2+) as cofactor.

It is found in the cytoplasm. The catalysed reaction is 3-methyl-2-oxobutanoate + acetyl-CoA + H2O = (2S)-2-isopropylmalate + CoA + H(+). It functions in the pathway amino-acid biosynthesis; L-leucine biosynthesis; L-leucine from 3-methyl-2-oxobutanoate: step 1/4. In terms of biological role, catalyzes the condensation of the acetyl group of acetyl-CoA with 3-methyl-2-oxobutanoate (2-ketoisovalerate) to form 3-carboxy-3-hydroxy-4-methylpentanoate (2-isopropylmalate). The chain is 2-isopropylmalate synthase from Campylobacter concisus (strain 13826).